A 1106-amino-acid chain; its full sequence is Voltage-dependent calcium channel subunit alpha-2/delta-1 (1106 aa).

Residues 1 to 26 (MAAGRPLAWTLTLWQAWLILIGPSSE) form the signal peptide. Residues 27-1076 (EPFPSAVTIK…VLEDYTDCGG (1050 aa)) lie on the Extracellular side of the membrane. Asn-94 is a glycosylation site (N-linked (GlcNAc...) asparagine). Position 121 is a phosphoserine (Ser-121). Residues Asn-138 and Asn-186 are each glycosylated (N-linked (GlcNAc...) asparagine). One can recognise a VWFA domain in the interval 255 to 432 (DMLILVDVSG…INTQEYLDVL (178 aa)). Residues Asp-261, Ser-263, and Ser-265 each coordinate a divalent metal cation. Positions 261-265 (DVSGS) match the MIDAS-like motif motif. 2 N-linked (GlcNAc...) asparagine glycosylation sites follow: Asn-326 and Asn-350. Cys-406 and Cys-1062 form a disulfide bridge. Residues 448 to 539 (WTNVYLDALE…QPKPIGVGIP (92 aa)) enclose the Cache domain. N-linked (GlcNAc...) asparagine glycans are attached at residues Asn-615, Asn-784, and Asn-891. Residues 1077–1097 (VSGLNPSLWSIIGIQFVLLWL) form a helical membrane-spanning segment. Over 1098–1106 (VSGSRHCLL) the chain is Cytoplasmic.

Belongs to the calcium channel subunit alpha-2/delta family. As to quaternary structure, dimer formed of alpha-2-1 and delta-1 chains; disulfide-linked. Voltage-dependent calcium channels are multisubunit complexes, consisting of alpha-1 (CACNA1), alpha-2 (CACNA2D), beta (CACNB) and delta (CACNA2D) subunits in a 1:1:1:1 ratio. Post-translationally, proteolytically processed into subunits alpha-2-1 and delta-1 that are disulfide-linked. Skeletal muscle.

It localises to the membrane. Its subcellular location is the cell membrane. The alpha-2/delta subunit of voltage-dependent calcium channels regulates calcium current density and activation/inactivation kinetics of the calcium channel. Plays an important role in excitation-contraction coupling. The chain is Voltage-dependent calcium channel subunit alpha-2/delta-1 (CACNA2D1) from Oryctolagus cuniculus (Rabbit).